We begin with the raw amino-acid sequence, 753 residues long: Subtilisin-like protease SBT3.17 (753 aa).

The signal sequence occupies residues 1 to 29 (MGNSFLIADTSSLVIGLLLILNGVFISAA). A propeptide spans 30–116 (KHYGLNKIHI…VVPSRVMRLK (87 aa)) (activation peptide). An Inhibitor I9 domain is found at 38–115 (HIVHLGAKQH…RVVPSRVMRL (78 aa)). The N-linked (GlcNAc...) asparagine glycan is linked to Asn97. The region spanning 120–603 (TFDYLGLLPT…GGLINPEKVT (484 aa)) is the Peptidase S8 domain. The active-site Charge relay system is Asp150. Asn161 carries an N-linked (GlcNAc...) asparagine glycan. The active-site Charge relay system is the His227. Residue Asn369 is glycosylated (N-linked (GlcNAc...) asparagine). The active-site Charge relay system is Ser534. Residues Asn639, Asn704, and Asn737 are each glycosylated (N-linked (GlcNAc...) asparagine).

Belongs to the peptidase S8 family.

It localises to the secreted. The chain is Subtilisin-like protease SBT3.17 from Arabidopsis thaliana (Mouse-ear cress).